The primary structure comprises 343 residues: N-acetyl-gamma-glutamyl-phosphate reductase (343 aa).

Residue Cys-146 is part of the active site.

Belongs to the NAGSA dehydrogenase family. Type 1 subfamily.

It is found in the cytoplasm. The catalysed reaction is N-acetyl-L-glutamate 5-semialdehyde + phosphate + NADP(+) = N-acetyl-L-glutamyl 5-phosphate + NADPH + H(+). Its pathway is amino-acid biosynthesis; L-arginine biosynthesis; N(2)-acetyl-L-ornithine from L-glutamate: step 3/4. Catalyzes the NADPH-dependent reduction of N-acetyl-5-glutamyl phosphate to yield N-acetyl-L-glutamate 5-semialdehyde. This chain is N-acetyl-gamma-glutamyl-phosphate reductase, found in Pseudarthrobacter chlorophenolicus (strain ATCC 700700 / DSM 12829 / CIP 107037 / JCM 12360 / KCTC 9906 / NCIMB 13794 / A6) (Arthrobacter chlorophenolicus).